The sequence spans 313 residues: Ribose-phosphate pyrophosphokinase (313 aa).

Residues 37–39 (DGE) and 96–97 (RQ) contribute to the ATP site. The Mg(2+) site is built by histidine 131 and aspartate 170. Lysine 193 is a catalytic residue. Residues arginine 195, aspartate 219, and 223 to 227 (DTAGT) contribute to the D-ribose 5-phosphate site.

It belongs to the ribose-phosphate pyrophosphokinase family. Class I subfamily. In terms of assembly, homohexamer. Requires Mg(2+) as cofactor.

Its subcellular location is the cytoplasm. The catalysed reaction is D-ribose 5-phosphate + ATP = 5-phospho-alpha-D-ribose 1-diphosphate + AMP + H(+). It functions in the pathway metabolic intermediate biosynthesis; 5-phospho-alpha-D-ribose 1-diphosphate biosynthesis; 5-phospho-alpha-D-ribose 1-diphosphate from D-ribose 5-phosphate (route I): step 1/1. Functionally, involved in the biosynthesis of the central metabolite phospho-alpha-D-ribosyl-1-pyrophosphate (PRPP) via the transfer of pyrophosphoryl group from ATP to 1-hydroxyl of ribose-5-phosphate (Rib-5-P). This chain is Ribose-phosphate pyrophosphokinase, found in Pseudomonas putida (strain ATCC 47054 / DSM 6125 / CFBP 8728 / NCIMB 11950 / KT2440).